We begin with the raw amino-acid sequence, 253 residues long: Complement C1q subcomponent subunit B (253 aa).

The first 25 residues, 1-25 (MKTQWGEVWTHLLLLLLGFLHVSWA), serve as a signal peptide directing secretion. A Pyrrolidone carboxylic acid modification is found at Gln-26. The Collagen-like domain occupies 29–112 (CTGPPGIPGI…GPRGPKGDSG (84 aa)). Residues Pro-33, Pro-36, Pro-39, Pro-51, and Pro-54 each carry the 4-hydroxyproline modification. The segment at 35–115 (IPGIPGVPGV…GPKGDSGDYG (81 aa)) is disordered. 5-hydroxylysine occurs at positions 57 and 60. Pro-63 is subject to 4-hydroxyproline. Lys-75 carries the 5-hydroxylysine modification. The span at 78-96 (PGIPGTPGKVGPKGPVGPK) shows a compositional bias: low complexity. Residues Pro-81 and Pro-84 each carry the 4-hydroxyproline modification. 5-hydroxylysine occurs at positions 90 and 96. At Pro-99 the chain carries 4-hydroxyproline. At Lys-108 the chain carries 5-hydroxylysine. Residues 115–253 (GATQKVAFSA…GFLLFPDMDA (139 aa)) form the C1q domain. A disulfide bond links Cys-179 and Cys-198. Asp-199, Tyr-200, and Gln-206 together coordinate Ca(2+).

As to quaternary structure, core component of the complement C1 complex, a calcium-dependent complex composed of 1 molecule of the C1Q subcomplex, 2 molecules of C1R and 2 molecules of C1S. The C1Q subcomplex is composed 18 subunits: 3 chains of C1QA, C1QB, and C1QC trimerize to form 6 collagen-like triple helices connected to six globular ligand-recognition modules (C1q domain). In terms of processing, hydroxylated on lysine and proline residues. Hydroxylated lysine residues can be glycosylated. Mouse C1Q contains up to 64.0 hydroxylysine-galactosylglucose residues. Total percentage hydroxylysine residues glycosylated is 95.1%. Contains no hydroxylysine-monosaccharides. In terms of tissue distribution, highest expression in thioglycolate-activated peritoneal macrophages. Also found in spleen, thymus and heart. Very weak expression liver, kidney, lung and intestine.

The protein localises to the secreted. The protein resides in the cell surface. Its activity is regulated as follows. The C1Q subcomplex is inhibited by sulfated molecules, such as triterpenoid sulfates, heparan sulfate, or chondroitin sulfates. Core component of the complement C1 complex, a multiprotein complex that initiates the classical pathway of the complement system, a cascade of proteins that leads to phagocytosis and breakdown of pathogens and signaling that strengthens the adaptive immune system. The classical complement pathway is initiated by the C1Q subcomplex of the C1 complex, which specifically binds IgG or IgM immunoglobulins complexed with antigens, forming antigen-antibody complexes on the surface of pathogens: C1QA, together with C1QB and C1QC, specifically recognizes and binds the Fc regions of IgG or IgM via its C1q domain. Immunoglobulin-binding activates the proenzyme C1R, which cleaves C1S, initiating the proteolytic cascade of the complement system. The C1Q subcomplex is activated by a hexamer of IgG complexed with antigens, while it is activated by a pentameric IgM. The C1Q subcomplex also recognizes and binds phosphatidylserine exposed on the surface of cells undergoing programmed cell death, possibly promoting activation of the complement system. The protein is Complement C1q subcomponent subunit B of Mus musculus (Mouse).